The following is a 360-amino-acid chain: Phosphoserine aminotransferase (360 aa).

Residue arginine 41 coordinates L-glutamate. Tryptophan 101, threonine 152, aspartate 172, and glutamine 195 together coordinate pyridoxal 5'-phosphate. Lysine 196 carries the N6-(pyridoxal phosphate)lysine modification. 237 to 238 serves as a coordination point for pyridoxal 5'-phosphate; the sequence is NT.

The protein belongs to the class-V pyridoxal-phosphate-dependent aminotransferase family. SerC subfamily. In terms of assembly, homodimer. Requires pyridoxal 5'-phosphate as cofactor.

Its subcellular location is the cytoplasm. It carries out the reaction O-phospho-L-serine + 2-oxoglutarate = 3-phosphooxypyruvate + L-glutamate. The enzyme catalyses 4-(phosphooxy)-L-threonine + 2-oxoglutarate = (R)-3-hydroxy-2-oxo-4-phosphooxybutanoate + L-glutamate. Its pathway is amino-acid biosynthesis; L-serine biosynthesis; L-serine from 3-phospho-D-glycerate: step 2/3. It participates in cofactor biosynthesis; pyridoxine 5'-phosphate biosynthesis; pyridoxine 5'-phosphate from D-erythrose 4-phosphate: step 3/5. Functionally, catalyzes the reversible conversion of 3-phosphohydroxypyruvate to phosphoserine and of 3-hydroxy-2-oxo-4-phosphonooxybutanoate to phosphohydroxythreonine. The polypeptide is Phosphoserine aminotransferase (Burkholderia orbicola (strain MC0-3)).